The primary structure comprises 147 residues: MALQRTHSLLLLLLLTLLGLGLVQPSYGQDGMYQRFLRQHVHPEETGGSDRYCNLMMQRRKMTLYHCKRFNTFIHEDIWNIRSICSTTNIQCKNGKMNCHEGVVKVTDCRDTGSSRAPNCRYRAMASTRRVVIACEGNPQVPVHFDG.

An N-terminal signal peptide occupies residues 1–28 (MALQRTHSLLLLLLLTLLGLGLVQPSYG). Q29 carries the post-translational modification Pyrrolidone carboxylic acid. DUMP contacts are provided by R35, H40, K68, N71, and T72. The active-site Proton acceptor is the H40. 4 disulfide bridges follow: C53–C109, C67–C120, C85–C135, and C92–C99. H144 acts as the Proton donor in catalysis. F145 is a dUMP binding site.

The protein belongs to the pancreatic ribonuclease family.

Its subcellular location is the secreted. In terms of biological role, cleaves preferentially after uridine bases. Has antimicrobial activity against uropathogenic E.coli (UPEC). Probably contributes to urinary tract sterility. This is Ribonuclease 4 (RNASE4) from Pan troglodytes (Chimpanzee).